Consider the following 503-residue polypeptide: Cytochrome P450 3A15 (503 aa).

Cys-442 is a heme binding site.

Belongs to the cytochrome P450 family. Heme is required as a cofactor.

The protein localises to the endoplasmic reticulum membrane. Its subcellular location is the microsome membrane. It carries out the reaction an organic molecule + reduced [NADPH--hemoprotein reductase] + O2 = an alcohol + oxidized [NADPH--hemoprotein reductase] + H2O + H(+). Its function is as follows. Cytochromes P450 are a group of heme-thiolate monooxygenases. In liver microsomes, this enzyme is involved in an NADPH-dependent electron transport pathway. It oxidizes a variety of structurally unrelated compounds, including steroids, fatty acids, and xenobiotics. This chain is Cytochrome P450 3A15 (CYP3A15), found in Cavia porcellus (Guinea pig).